The primary structure comprises 179 residues: Large ribosomal subunit protein uL5 (179 aa).

The protein belongs to the universal ribosomal protein uL5 family. As to quaternary structure, part of the 50S ribosomal subunit; part of the 5S rRNA/L5/L18/L25 subcomplex. Contacts the 5S rRNA and the P site tRNA. Forms a bridge to the 30S subunit in the 70S ribosome.

This is one of the proteins that bind and probably mediate the attachment of the 5S RNA into the large ribosomal subunit, where it forms part of the central protuberance. In the 70S ribosome it contacts protein S13 of the 30S subunit (bridge B1b), connecting the 2 subunits; this bridge is implicated in subunit movement. Contacts the P site tRNA; the 5S rRNA and some of its associated proteins might help stabilize positioning of ribosome-bound tRNAs. The protein is Large ribosomal subunit protein uL5 of Paramagnetospirillum magneticum (strain ATCC 700264 / AMB-1) (Magnetospirillum magneticum).